Here is a 320-residue protein sequence, read N- to C-terminus: 4-hydroxyproline 2-epimerase (320 aa).

Cys-98 serves as the catalytic Proton acceptor. Substrate contacts are provided by residues 99–100, His-218, and Asp-242; that span reads GH. Residue Cys-246 is the Proton donor of the active site. 247–248 contacts substrate; sequence GT.

It belongs to the proline racemase family.

The enzyme catalyses trans-4-hydroxy-L-proline = cis-4-hydroxy-D-proline. Its function is as follows. Catalyzes the epimerization of trans-4-hydroxy-L-proline (t4LHyp) to cis-4-hydroxy-D-proline (c4DHyp). Is likely involved in a degradation pathway that converts t4LHyp to alpha-ketoglutarate. Displays no proline racemase activity. The polypeptide is 4-hydroxyproline 2-epimerase (Burkholderia pseudomallei (strain 1710b)).